Reading from the N-terminus, the 195-residue chain is Imidazoleglycerol-phosphate dehydratase (195 aa).

It belongs to the imidazoleglycerol-phosphate dehydratase family.

The protein resides in the cytoplasm. It catalyses the reaction D-erythro-1-(imidazol-4-yl)glycerol 3-phosphate = 3-(imidazol-4-yl)-2-oxopropyl phosphate + H2O. It participates in amino-acid biosynthesis; L-histidine biosynthesis; L-histidine from 5-phospho-alpha-D-ribose 1-diphosphate: step 6/9. The protein is Imidazoleglycerol-phosphate dehydratase of Citrifermentans bemidjiense (strain ATCC BAA-1014 / DSM 16622 / JCM 12645 / Bem) (Geobacter bemidjiensis).